The sequence spans 857 residues: Putative disease resistance protein At1g50180 (857 aa).

A coiled-coil region spans residues 27-60 (IGDQVKQLQDELKRLNCFLKDADEKQHESERVRN). Residues 148-461 (SLREQRQSFP…AEGMVMPVKH (314 aa)) enclose the NB-ARC domain. An ATP-binding site is contributed by 192–199 (GMGGLGKT). LRR repeat units follow at residues 653–678 (MTSL…SLSK), 680–703 (LKRL…DVTQ), 754–780 (LPNL…NLEN), and 791–816 (MMRL…RFLK).

This sequence belongs to the disease resistance NB-LRR family.

In terms of biological role, potential disease resistance protein. This chain is Putative disease resistance protein At1g50180, found in Arabidopsis thaliana (Mouse-ear cress).